Here is a 443-residue protein sequence, read N- to C-terminus: tRNA modification GTPase MnmE (443 aa).

(6S)-5-formyl-5,6,7,8-tetrahydrofolate contacts are provided by arginine 23, glutamate 80, and lysine 120. Positions 217-367 constitute a TrmE-type G domain; sequence GFEVVILGAP…LLAEIGRRAA (151 aa). GTP contacts are provided by residues 227–232, 246–252, and 271–274; these read NAGKSS, TDEPGTT, and DTAG. Mg(2+)-binding residues include serine 231 and threonine 252. Residue lysine 443 coordinates (6S)-5-formyl-5,6,7,8-tetrahydrofolate.

Belongs to the TRAFAC class TrmE-Era-EngA-EngB-Septin-like GTPase superfamily. TrmE GTPase family. In terms of assembly, homodimer. Heterotetramer of two MnmE and two MnmG subunits. Requires K(+) as cofactor.

The protein resides in the cytoplasm. In terms of biological role, exhibits a very high intrinsic GTPase hydrolysis rate. Involved in the addition of a carboxymethylaminomethyl (cmnm) group at the wobble position (U34) of certain tRNAs, forming tRNA-cmnm(5)s(2)U34. This chain is tRNA modification GTPase MnmE, found in Mesorhizobium japonicum (strain LMG 29417 / CECT 9101 / MAFF 303099) (Mesorhizobium loti (strain MAFF 303099)).